Reading from the N-terminus, the 432-residue chain is D-amino acid dehydrogenase (432 aa).

An FAD-binding site is contributed by 3–17 (VVVLGSGVVGVTSAW).

This sequence belongs to the DadA oxidoreductase family. The cofactor is FAD.

The enzyme catalyses a D-alpha-amino acid + A + H2O = a 2-oxocarboxylate + AH2 + NH4(+). It functions in the pathway amino-acid degradation; D-alanine degradation; NH(3) and pyruvate from D-alanine: step 1/1. Functionally, oxidative deamination of D-amino acids. This is D-amino acid dehydrogenase from Enterobacter sp. (strain 638).